The primary structure comprises 425 residues: Melibiose permease (425 aa).

Over 1-13 (MNTTTCTHKDNPN) the chain is Cytoplasmic. The chain crosses the membrane as a helical span at residues 14-34 (FWIFGLFFFLYFFIMATCFPF). Topologically, residues 35–50 (LPIWLSDIIGLNKTHT) are periplasmic. The helical transmembrane segment at 51–71 (GIVFSCISLSAIAFQPVLGVI) threads the bilayer. Residues 72 to 80 (SDKLGLKKH) are Cytoplasmic-facing. Residues 81 to 101 (LLWIISVLLFLFAPFFLYVFA) form a helical membrane-spanning segment. Residues 102 to 107 (PLLKTN) lie on the Periplasmic side of the membrane. The chain crosses the membrane as a helical span at residues 108–128 (IWLGALSGGLYIGFVFSAGSG). Residues 129 to 149 (AIEAYIERVSRNSAFEYGKAR) lie on the Cytoplasmic side of the membrane. A helical membrane pass occupies residues 150 to 170 (MFGCLGWGLCASTGGILFGID). Pro171 is a topological domain (periplasmic). The helical transmembrane segment at 172 to 192 (SYVFWMGSAAALLLMLLLVVA) threads the bilayer. The Cytoplasmic segment spans residues 193–227 (KPKPNQTAQVMNALGANQPQITAKKVFNLFRQRRM). The chain crosses the membrane as a helical span at residues 228-248 (WMFILYVIGVACVYDVFDQQF). Over 249–267 (ATFFKTFFATPQEGTRAFG) the chain is Periplasmic. Residues 268-288 (FATTAGEICNAIIMFCSPWII) form a helical membrane-spanning segment. At 289-297 (NRIGAKNTL) the chain is on the cytoplasmic side. The helical transmembrane segment at 298–318 (LIAGLIMATRIIGSSFATTAV) threads the bilayer. Residues 319–325 (EVIALKM) lie on the Periplasmic side of the membrane. A helical membrane pass occupies residues 326–346 (LHALEVPFLLVGAFKYITGVF). Residues 347–353 (DTRLSAT) lie on the Cytoplasmic side of the membrane. The helical transmembrane segment at 354–374 (IYLIGFQFAKQSAAIFLSAFA) threads the bilayer. The Periplasmic segment spans residues 375-385 (GNMYDRIGFQE). Residues 386-406 (TYLMLGCFVLAITVVSAFTLS) traverse the membrane as a helical segment. At 407-425 (SRQEIAAAAGAAALTSQSR) the chain is on the cytoplasmic side.

This sequence belongs to the major facilitator superfamily. Oligosaccharide:H(+) symporter (OHS) (TC 2.A.1.5) family.

It localises to the cell inner membrane. Its function is as follows. Responsible for transport of melibiose into the cell, with the concomitant import of a proton (symport system). Can also transport lactose, and has weak activity with maltose. Cannot transport the analog methyl-1-thio-beta,D-galactopyranoside (TMG). This chain is Melibiose permease, found in Enterobacter cloacae subsp. cloacae (strain ATCC 13047 / DSM 30054 / NBRC 13535 / NCTC 10005 / WDCM 00083 / NCDC 279-56).